We begin with the raw amino-acid sequence, 312 residues long: Ribosomal RNA small subunit methyltransferase H (312 aa).

S-adenosyl-L-methionine is bound by residues 33–35 (AGH), D52, F79, D100, and Q107.

Belongs to the methyltransferase superfamily. RsmH family.

The protein resides in the cytoplasm. It carries out the reaction cytidine(1402) in 16S rRNA + S-adenosyl-L-methionine = N(4)-methylcytidine(1402) in 16S rRNA + S-adenosyl-L-homocysteine + H(+). In terms of biological role, specifically methylates the N4 position of cytidine in position 1402 (C1402) of 16S rRNA. This Finegoldia magna (strain ATCC 29328 / DSM 20472 / WAL 2508) (Peptostreptococcus magnus) protein is Ribosomal RNA small subunit methyltransferase H.